Here is a 522-residue protein sequence, read N- to C-terminus: Ankyrin repeat and death domain-containing protein 1A (522 aa).

ANK repeat units follow at residues 14–43 (PLER…NTRA), 47–76 (VGRV…AVDE), 90–119 (FGMN…KIHC), 123–152 (DGLT…DVAL), 158–187 (LGRT…DHNV), 191–220 (EGNT…DLEE), 224–253 (EGLT…TVNA), 257–286 (KNLS…CANV), 290–319 (QGAS…DVNA), 323–352 (RQQT…DLNL), and 356–385 (QGKT…FYRW). The Death domain maps to 413 to 501 (SVLWRLASRY…DLAGWSTMAR (89 aa)).

This is Ankyrin repeat and death domain-containing protein 1A (ANKDD1A) from Homo sapiens (Human).